Reading from the N-terminus, the 967-residue chain is Serine/threonine-protein kinase/endoribonuclease ire-1 (967 aa).

Positions 1 to 21 are cleaved as a signal peptide; that stretch reads MRATFHLFTFIFLLLFSSVIC. The Lumenal portion of the chain corresponds to 22–438; the sequence is ISTPGFRNDH…LLLLNNHPIP (417 aa). 2 N-linked (GlcNAc...) asparagine glycosylation sites follow: N100 and N188. The chain crosses the membrane as a helical span at residues 439-455; that stretch reads FYATLVTMFALLLTVIW. The Cytoplasmic segment spans residues 456–967; sequence QCGRQWDQQK…IKKKSNPNTD (512 aa). The tract at residues 474 to 494 is disordered; it reads EIVNNPGESRSAQTSKQSNRG. Over residues 479 to 494 the composition is skewed to polar residues; it reads PGESRSAQTSKQSNRG. The region spanning 518-778 is the Protein kinase domain; it reads YSPSDILGTG…ADAVLNHPFF (261 aa). ATP-binding positions include 524–532 and K546; that span reads LGTGCEGTV. Residue D636 is the Proton acceptor of the active site. S672 is modified (phosphoserine; by autocatalysis). The region spanning 781–909 is the KEN domain; the sequence is SEKRLAYFSD…EAVFKRYYSD (129 aa). Residues 948–967 are disordered; the sequence is RTPLKLDKRNIKKKSNPNTD. A compositionally biased stretch (basic residues) spans 957–967; the sequence is NIKKKSNPNTD.

The protein belongs to the protein kinase superfamily. Ser/Thr protein kinase family. The cofactor is Mg(2+). Post-translationally, autophosphorylated mainly on serine residues.

The protein resides in the endoplasmic reticulum membrane. It carries out the reaction L-seryl-[protein] + ATP = O-phospho-L-seryl-[protein] + ADP + H(+). The catalysed reaction is L-threonyl-[protein] + ATP = O-phospho-L-threonyl-[protein] + ADP + H(+). Its activity is regulated as follows. The kinase domain is activated by trans-autophosphorylation. Kinase activity is required for activation of the endoribonuclease domain. Its function is as follows. Senses unfolded proteins in the lumen of the endoplasmic reticulum via its N-terminal domain which leads to enzyme auto-activation. The active endoribonuclease domain splices xbp-1 precursor mRNA to produce the mature form which then induces transcription of UPR target genes. Unfolded protein response (UPR) transcriptional activation by ire-1, as well as translational attenuation by pek-1 in a complementary pathway, maintains ER homeostasis. Regulates the transcriptional up-regulation of nucleoside-diphosphatase apy-1 and many other genes, upon ER stress. By activating the UPR pathway during non-lethal hypoxia pre-conditioning, confers adaptive protection to subsequent exposure to hypoxia. ire-1 and pek-1 are redundant genes that control a pathway essential for larval development and survival. Plays a role in the nuclear retention of unspliced mRNAs. The polypeptide is Serine/threonine-protein kinase/endoribonuclease ire-1 (Caenorhabditis elegans).